Reading from the N-terminus, the 262-residue chain is ClpXP adapter protein SpxH (262 aa).

Belongs to the SpxH family. Interacts with Spx.

The protein resides in the cytoplasm. Its function is as follows. Adapter protein required for efficient degradation of Spx by ClpXP under non-stress conditions. Interaction with Spx stabilizes Spx and exposes the C-terminus of Spx for recognition and proteolysis by ClpXP. This chain is ClpXP adapter protein SpxH, found in Staphylococcus saprophyticus subsp. saprophyticus (strain ATCC 15305 / DSM 20229 / NCIMB 8711 / NCTC 7292 / S-41).